A 373-amino-acid polypeptide reads, in one-letter code: Tryptophan--tRNA ligase (373 aa).

The short motif at 79-87 (PSGKFHFGH) is the 'HIGH' region element. A 'KMSKS' region motif is present at residues 257–261 (KMSSS).

It belongs to the class-I aminoacyl-tRNA synthetase family.

The protein localises to the cytoplasm. The enzyme catalyses tRNA(Trp) + L-tryptophan + ATP = L-tryptophyl-tRNA(Trp) + AMP + diphosphate + H(+). This Hyperthermus butylicus (strain DSM 5456 / JCM 9403 / PLM1-5) protein is Tryptophan--tRNA ligase.